The chain runs to 362 residues: Histidinol-phosphate aminotransferase (362 aa).

At Lys218 the chain carries N6-(pyridoxal phosphate)lysine.

The protein belongs to the class-II pyridoxal-phosphate-dependent aminotransferase family. Histidinol-phosphate aminotransferase subfamily. In terms of assembly, homodimer. The cofactor is pyridoxal 5'-phosphate.

It carries out the reaction L-histidinol phosphate + 2-oxoglutarate = 3-(imidazol-4-yl)-2-oxopropyl phosphate + L-glutamate. Its pathway is amino-acid biosynthesis; L-histidine biosynthesis; L-histidine from 5-phospho-alpha-D-ribose 1-diphosphate: step 7/9. The protein is Histidinol-phosphate aminotransferase of Xanthomonas campestris pv. campestris (strain B100).